The sequence spans 298 residues: ER-bound oxygenase mpaB (298 aa).

Over 1 to 24 (MDKGTSFFTTPSFSATTRAIFNTM) the chain is Lumenal. The helical transmembrane segment at 25–45 (PQWFSFAVGLLIAYPLLINSL) threads the bilayer. Over 46-298 (RYRRLKQLQK…RLRKAMLYVE (253 aa)) the chain is Cytoplasmic.

It belongs to the mpaB oxygenase family.

The protein resides in the endoplasmic reticulum membrane. It carries out the reaction 4-farnesyl-3,5-dihydroxy-6-methylphthalide + AH2 + 2 O2 = (4E,8E)-10-(4,6-dihydroxy-7-methyl-3-oxo-1,3-dihydro-2-benzofuran-5-yl)-4,8-dimethyldeca-4,8-dienoate + acetone + A + H2O + H(+). It participates in secondary metabolite biosynthesis; terpenoid biosynthesis. Its function is as follows. ER-bound oxygenase; part of the gene cluster that mediates the biosynthesis of mycophenolic acid (MPA), the first isolated antibiotic natural product in the world obtained from a culture of Penicillium brevicompactum in 1893. MpaB catalyzes the oxidative cleavage the C19-C20 double bond in farnesyl-DHMP (FDHMP) to yield FDHMP-3C via a mycophenolic aldehyde intermediate. The first step of the pathway is the synthesis of 5-methylorsellinic acid (5MOA) by the cytosolic polyketide synthase mpaC. 5MOA is then converted to the phthalide compound 5,7-dihydroxy-4,6-dimethylphthalide (DHMP) by the endoplasmic reticulum-bound cytochrome P450 monooxygenase mpaDE. MpaDE first catalyzes hydroxylation of 5-MOA to 4,6-dihydroxy-2-(hydroxymethyl)-3-methylbenzoic acid (DHMB). MpaDE then acts as a lactone synthase that catalyzes the ring closure to convert DHMB into DHMP. The next step is the prenylation of DHMP by the Golgi apparatus-associated prenyltransferase mpaA to yield farnesyl-DHMP (FDHMP). The ER-bound oxygenase mpaB then mediates the oxidative cleavage the C19-C20 double bond in FDHMP to yield FDHMP-3C via a mycophenolic aldehyde intermediate. The O-methyltransferase mpaG catalyzes the methylation of FDHMP-3C to yield MFDHMP-3C. After the cytosolic methylation of FDHMP-3C, MFDHMP-3C enters into peroxisomes probably via free diffusion due to its low molecular weight. Upon a peroxisomal CoA ligation reaction, catalyzed by a beta-oxidation component enzyme acyl-CoA ligase ACL891, MFDHMP-3C-CoA would then be restricted to peroxisomes for the following beta-oxidation pathway steps. The peroxisomal beta-oxidation machinery than converts MFDHMP-3C-CoA into MPA_CoA, via a beta-oxidation chain-shortening process. Finally mpaH acts as a peroxisomal acyl-CoA hydrolase with high substrate specificity toward MPA-CoA to release the final product MPA. The protein is ER-bound oxygenase mpaB of Penicillium roqueforti (strain FM164).